We begin with the raw amino-acid sequence, 513 residues long: ATP synthase subunit alpha (513 aa).

169 to 176 (GDRQTGKT) contributes to the ATP binding site.

Belongs to the ATPase alpha/beta chains family. F-type ATPases have 2 components, CF(1) - the catalytic core - and CF(0) - the membrane proton channel. CF(1) has five subunits: alpha(3), beta(3), gamma(1), delta(1), epsilon(1). CF(0) has three main subunits: a(1), b(2) and c(9-12). The alpha and beta chains form an alternating ring which encloses part of the gamma chain. CF(1) is attached to CF(0) by a central stalk formed by the gamma and epsilon chains, while a peripheral stalk is formed by the delta and b chains.

The protein localises to the cell inner membrane. The catalysed reaction is ATP + H2O + 4 H(+)(in) = ADP + phosphate + 5 H(+)(out). In terms of biological role, produces ATP from ADP in the presence of a proton gradient across the membrane. The alpha chain is a regulatory subunit. The protein is ATP synthase subunit alpha of Aliivibrio fischeri (strain ATCC 700601 / ES114) (Vibrio fischeri).